A 219-amino-acid chain; its full sequence is Suppressor-of-stellate-like protein (219 aa).

The interval S194–F219 is disordered. Positions S204–F219 are enriched in polar residues.

Belongs to the casein kinase 2 subunit beta family.

This is Suppressor-of-stellate-like protein (Ssl) from Drosophila melanogaster (Fruit fly).